The following is a 447-amino-acid chain: Methionine aminopeptidase 2-2 (447 aa).

The segment at 1–89 is disordered; sequence MAAQTAPELA…PRIPLTTLFP (89 aa). The span at 15 to 30 shows a compositional bias: polar residues; that stretch reads NKNSGSAEANVVSNGG. A compositionally biased stretch (acidic residues) spans 34-47; it reads DDAENEGDSDDDKD. Positions 59–73 are enriched in basic residues; the sequence is KKKKKKRSKKKKKAA. Residue H197 participates in substrate binding. D217, D228, and H297 together coordinate a divalent metal cation. H305 serves as a coordination point for substrate. E333 and E428 together coordinate a divalent metal cation.

It belongs to the peptidase M24A family. Methionine aminopeptidase eukaryotic type 2 subfamily. Requires Co(2+) as cofactor. It depends on Zn(2+) as a cofactor. Mn(2+) serves as cofactor. The cofactor is Fe(2+).

The protein resides in the cytoplasm. The enzyme catalyses Release of N-terminal amino acids, preferentially methionine, from peptides and arylamides.. In terms of biological role, cotranslationally removes the N-terminal methionine from nascent proteins. The N-terminal methionine is often cleaved when the second residue in the primary sequence is small and uncharged (Met-Ala-, Cys, Gly, Pro, Ser, Thr, or Val). In Arthroderma otae (strain ATCC MYA-4605 / CBS 113480) (Microsporum canis), this protein is Methionine aminopeptidase 2-2.